The sequence spans 164 residues: CB1 cannabinoid receptor-interacting protein 1 (164 aa).

The protein belongs to the CNRIP family. As to quaternary structure, interacts with the cannabinoid receptor CNR1 (via C-terminus). Does not interact with cannabinoid receptor CNR2. Highly expressed in brain. Also detected in heart, lung, intestine, kidney, testis, spleen, liver and muscle (at protein level).

Its function is as follows. Suppresses cannabinoid receptor CNR1-mediated tonic inhibition of voltage-gated calcium channels. In Mus musculus (Mouse), this protein is CB1 cannabinoid receptor-interacting protein 1 (Cnrip1).